The sequence spans 397 residues: Subtilisin-like protease 3 (397 aa).

Residues 1 to 19 (MGCIKVISVFLAAIAAVDA) form the signal peptide. The propeptide occupies 20–116 (RAFFHNRGGS…VEHDRVVKLA (97 aa)). The 82-residue stretch at 35–116 (SYIVVMKDGV…VEHDRVVKLA (82 aa)) folds into the Inhibitor I9 domain. The region spanning 126–397 (TWGLGRVSHR…NRLLYNGSGQ (272 aa)) is the Peptidase S8 domain. Residues D158 and H189 each act as charge relay system in the active site. N250 is a glycosylation site (N-linked (GlcNAc...) asparagine). S344 (charge relay system) is an active-site residue. N393 carries N-linked (GlcNAc...) asparagine glycosylation.

The protein belongs to the peptidase S8 family.

The protein resides in the secreted. Secreted subtilisin-like serine protease with keratinolytic activity that contributes to pathogenicity. The polypeptide is Subtilisin-like protease 3 (SUB3) (Trichophyton equinum (Horse ringworm fungus)).